A 625-amino-acid chain; its full sequence is Enolase 4 (625 aa).

Residues 184-226 (YSTVPTPLPPVPPPPPPPPPTKKKGQKPGRKDTITEKPIAPAE) are disordered. A compositionally biased stretch (pro residues) spans 189–203 (TPLPPVPPPPPPPPP). Residue Val-300 coordinates substrate. The interval 331 to 350 (PSPPKAETKKGHDGSKRGQQ) is disordered. Positions 336 to 346 (AETKKGHDGSK) are enriched in basic and acidic residues. Asn-497 functions as the Proton acceptor in the catalytic mechanism. Gly-548 contacts substrate. A disordered region spans residues 604–625 (PLVPTFPTQGVEESAETGASSG).

This sequence belongs to the enolase family. Interacts with ENO1 and AKAP4. Synthesized as an approximately 70-kDa precursor, which then undergoes proteolytic cleavage to an approximately 60-kDa enzyme; HOATZ associates directly or indirectly with ENO4 to mediate this process before its transport to mature flagella.

The enzyme catalyses (2R)-2-phosphoglycerate = phosphoenolpyruvate + H2O. Its pathway is carbohydrate degradation; glycolysis; pyruvate from D-glyceraldehyde 3-phosphate: step 4/5. May be required for sperm motility and function. In Homo sapiens (Human), this protein is Enolase 4.